We begin with the raw amino-acid sequence, 81 residues long: Trefoil factor 3 (81 aa).

Positions methionine 1 to alanine 22 are cleaved as a signal peptide. The 44-residue stretch at serine 31–leucine 74 folds into the P-type domain. 3 cysteine pairs are disulfide-bonded: cysteine 33–cysteine 59, cysteine 43–cysteine 58, and cysteine 53–cysteine 70.

In terms of assembly, monomer. Homodimer; disulfide-linked. As to expression, expressed in goblet cells of the intestines, and colon, in paraventricular hypothalamus and supraoptic nuclei. Weakly expressed in gastric epithelial cells (at protein level). Expressed by goblet cells of small and large intestinal epithelia, kidney and stomach. Expressed in the paraventricular hypothalamus, arcuate nucleus and amygdala of the brain. Weakly expressed in gastric epithelial cells.

It localises to the secreted. The protein localises to the extracellular space. Its subcellular location is the extracellular matrix. The protein resides in the cytoplasm. Involved in the maintenance and repair of the intestinal mucosa. Promotes the mobility of epithelial cells in healing processes (motogen). The chain is Trefoil factor 3 (Tff3) from Rattus norvegicus (Rat).